The following is a 396-amino-acid chain: L-lactate dehydrogenase (396 aa).

An FMN hydroxy acid dehydrogenase domain is found at 1 to 380; that stretch reads MIISAASDYR…SGDSLVQELG (380 aa). Tyr-24 provides a ligand contact to substrate. FMN-binding residues include Ser-106 and Gln-127. Residue Tyr-129 coordinates substrate. Thr-155 contributes to the FMN binding site. Arg-164 contacts substrate. Lys-251 is an FMN binding site. The active-site Proton acceptor is His-275. Residue Arg-278 coordinates substrate. 306 to 330 contributes to the FMN binding site; the sequence is DSGIRNGLDVVRMIALGADTVLLGR.

This sequence belongs to the FMN-dependent alpha-hydroxy acid dehydrogenase family. It depends on FMN as a cofactor.

Its subcellular location is the cell inner membrane. It catalyses the reaction (S)-lactate + A = pyruvate + AH2. Its function is as follows. Catalyzes the conversion of L-lactate to pyruvate. Is coupled to the respiratory chain. This chain is L-lactate dehydrogenase, found in Salmonella paratyphi B (strain ATCC BAA-1250 / SPB7).